Consider the following 418-residue polypeptide: Cell division protein FtsA (418 aa).

Belongs to the FtsA/MreB family. In terms of assembly, self-interacts. Interacts with FtsZ.

It is found in the cell inner membrane. Cell division protein that is involved in the assembly of the Z ring. May serve as a membrane anchor for the Z ring. In Buchnera aphidicola subsp. Schizaphis graminum (strain Sg), this protein is Cell division protein FtsA.